We begin with the raw amino-acid sequence, 57 residues long: Mambalgin-3 (57 aa).

4 disulfides stabilise this stretch: Cys3-Cys19, Cys12-Cys37, Cys41-Cys49, and Cys50-Cys55.

It belongs to the three-finger toxin family. Short-chain subfamily. Mambalgin sub-subfamily. As to expression, expressed by the venom gland.

The protein resides in the secreted. Its function is as follows. This three-finger toxin inhibits ASIC channels. It acts as a gating modifier toxin by decreasing the apparent proton sensitivity of activation and by slightly increasing the apparent proton sensitivity for inactivation. It binds more tightly to the closed state and to a much lesser extent the inactivated/desensitized state of ASIC1a. It interacts directly with the outside surface of the thumb domain of chicken ASIC1a (ASIC1a), but does not insert into the acidic pocket as suggested previously. This binding leads to relocation of the thumb domain that could disrupt the acidic pocket of cASIC1a. The peptide exerts both stimulatory and inhibitory effects on ASIC1a. It reversibly inhibits rASIC1a (IC(50)=17 nM), rASIC1b (IC(50)= 44 nM) and rASIC1a-rASIC2a (IC(50)=252 nM) channels. In vivo, it shows a potent naloxone-resistant analgesic effect against acute and inflammatory pain upon central and peripheral injection. In addition, it also has an opioid-independent effect on both thermal and mechanical inflammatory pain after systemic administration and is effective against neuropathic pain. In Dendroaspis angusticeps (Eastern green mamba), this protein is Mambalgin-3.